The following is a 198-amino-acid chain: uncharacterized protein (198 aa).

Disordered stretches follow at residues 15–69 and 172–198; these read RLGQ…KDTR and FSVKESSNLSNNDSDASLDEDTLLWGL. Composition is skewed to basic and acidic residues over residues 37 to 49 and 56 to 69; these read HKSFENLGRDQSR and FNEKQSTEPPKDTR. The segment covering 176-186 has biased composition (low complexity); it reads ESSNLSNNDSD. Residues 187 to 198 are compositionally biased toward acidic residues; that stretch reads ASLDEDTLLWGL.

It is found in the nucleus. This is an uncharacterized protein from Schizosaccharomyces pombe (strain 972 / ATCC 24843) (Fission yeast).